Reading from the N-terminus, the 107-residue chain is MMKGGLAGLMKQAQQMQEKMKTTQAELAALEVTGQAAGGLVKVTISGKYELKRVQIDPGAMDDREMLEDLIVTAYTEAFKQVEAASAQMMSGATAGMPMPPGFKLPF.

It belongs to the YbaB/EbfC family. As to quaternary structure, homodimer.

It is found in the cytoplasm. Its subcellular location is the nucleoid. Binds to DNA and alters its conformation. May be involved in regulation of gene expression, nucleoid organization and DNA protection. This chain is Nucleoid-associated protein Pnec_0645, found in Polynucleobacter necessarius subsp. necessarius (strain STIR1).